Consider the following 628-residue polypeptide: Kelch-like protein diablo (628 aa).

The tract at residues 1-56 (MGDLPGSTGGGSGPAAAGNASGNASSAGNTGLGVAGTTGVDRPPSPARLSHTSEKH) is disordered. The span at 14-29 (PAAAGNASGNASSAGN) shows a compositional bias: low complexity. One can recognise a BTB domain in the interval 74–141 (CDVVLNVGGR…CYTAHIIVEE (68 aa)). In terms of domain architecture, BACK spans 176 to 278 (CLGIRAFADT…SPKFLVGTVG (103 aa)). Kelch repeat units follow at residues 325–371 (VLFA…VLND), 373–419 (LYAV…VLDG), 420–466 (FLYA…VLGG), 468–513 (LYAI…VFNN), 515–560 (IYAV…VVNG), and 561–607 (QLYA…VMRA).

The protein operates within protein modification; protein ubiquitination. Functionally, probable substrate-specific adapter of an E3 ubiquitin-protein ligase complex which mediates the ubiquitination and subsequent proteasomal degradation of target proteins. May have a role in synapse differentiation and growth. The chain is Kelch-like protein diablo from Drosophila pseudoobscura pseudoobscura (Fruit fly).